The primary structure comprises 378 residues: Putative protein YbfL (378 aa).

Belongs to the transposase 11 family.

This Escherichia coli (strain K12) protein is Putative protein YbfL (ybfL).